We begin with the raw amino-acid sequence, 302 residues long: N-acetyl-D-glucosamine kinase (302 aa).

ATP-binding positions include 4 to 11 (GFDVGGTK) and 133 to 140 (GFGGGLVY). His157, Cys177, Cys179, and Cys184 together coordinate Zn(2+).

It belongs to the ROK (NagC/XylR) family. NagK subfamily.

The enzyme catalyses N-acetyl-D-glucosamine + ATP = N-acetyl-D-glucosamine 6-phosphate + ADP + H(+). It functions in the pathway cell wall biogenesis; peptidoglycan recycling. Its function is as follows. Catalyzes the phosphorylation of N-acetyl-D-glucosamine (GlcNAc) derived from cell-wall degradation, yielding GlcNAc-6-P. The polypeptide is N-acetyl-D-glucosamine kinase (Vibrio atlanticus (strain LGP32) (Vibrio splendidus (strain Mel32))).